Consider the following 232-residue polypeptide: MAKISKRRQAFAAKVDRQKLYPIDDALALVKECASAKFDESIDVAVQLGIDAKKSDQVVRGSVVLPAGTGKSVRVAVFAQGEKAEQARAAGAEVVGMEDLAEQIKAGQMDFDIVIASPDTMRIVGTLGQILGPRGLMPNPKVGTVTPDVATAVKNAKAGQVQFRVDKAGIIHATIGRASFEPTALRTNLSALIEALQKAKPATSKGVYLRKIALSSTMGVGVRVDQGSLAAQ.

The protein belongs to the universal ribosomal protein uL1 family. As to quaternary structure, part of the 50S ribosomal subunit.

Its function is as follows. Binds directly to 23S rRNA. The L1 stalk is quite mobile in the ribosome, and is involved in E site tRNA release. In terms of biological role, protein L1 is also a translational repressor protein, it controls the translation of the L11 operon by binding to its mRNA. The chain is Large ribosomal subunit protein uL1 from Burkholderia mallei (strain NCTC 10247).